The sequence spans 1401 residues: DNA-directed RNA polymerase subunit beta' (1401 aa).

Positions 71, 73, 86, and 89 each coordinate Zn(2+). Aspartate 462, aspartate 464, and aspartate 466 together coordinate Mg(2+). Residues cysteine 810, cysteine 884, cysteine 891, and cysteine 894 each contribute to the Zn(2+) site. Residues arginine 1377–glutamate 1401 form a disordered region.

The protein belongs to the RNA polymerase beta' chain family. As to quaternary structure, the RNAP catalytic core consists of 2 alpha, 1 beta, 1 beta' and 1 omega subunit. When a sigma factor is associated with the core the holoenzyme is formed, which can initiate transcription. The cofactor is Mg(2+). Requires Zn(2+) as cofactor.

It carries out the reaction RNA(n) + a ribonucleoside 5'-triphosphate = RNA(n+1) + diphosphate. Its function is as follows. DNA-dependent RNA polymerase catalyzes the transcription of DNA into RNA using the four ribonucleoside triphosphates as substrates. The protein is DNA-directed RNA polymerase subunit beta' of Rhizobium meliloti (strain 1021) (Ensifer meliloti).